A 120-amino-acid chain; its full sequence is Large ribosomal subunit protein uL18 (120 aa).

The protein belongs to the universal ribosomal protein uL18 family. Part of the 50S ribosomal subunit; part of the 5S rRNA/L5/L18/L25 subcomplex. Contacts the 5S and 23S rRNAs.

This is one of the proteins that bind and probably mediate the attachment of the 5S RNA into the large ribosomal subunit, where it forms part of the central protuberance. This is Large ribosomal subunit protein uL18 from Azorhizobium caulinodans (strain ATCC 43989 / DSM 5975 / JCM 20966 / LMG 6465 / NBRC 14845 / NCIMB 13405 / ORS 571).